Here is a 327-residue protein sequence, read N- to C-terminus: Aldo-keto reductase FVEG_12638 (327 aa).

Asp51 provides a ligand contact to NADP(+). Tyr56 functions as the Proton donor in the catalytic mechanism. His122 is a substrate binding site. NADP(+)-binding positions include Ser152 to Glu153, Gly202 to Asp212, and Glu286 to Glu294.

It belongs to the aldo/keto reductase family. Aldo/keto reductase 2 subfamily.

Functionally, aldo-keto reductase; part of the Fusarium detoxification of benzoxazolinone cluster 2 (FDB2) involved in the degradation of benzoxazolinones produced by the host plant. Maize, wheat, and rye produce the 2 benzoxazinone phytoanticipins 2,4-dihy-droxy-7-methoxy-1,4-benzoxazin-3-one (DIMBOA) and 2,4-dihydroxy-1,4-benzoxazin-3-one (DIBOA) that, due to their inherent instability once released, spontaneously degrade to the more stable corresponding benzoxazolinones, 6-methoxy-2-benzoxazolinone (MBOA) and 2-benzoxazolinone (BOA), respectively. The first step in the detoxification of benzoxazolinones involves the hydrolysis of the cyclic ester bond of benzoxazolinones by the FDB1 cluster gamma-lactamase MBL1 to aminophenols. MBL1 is able to convert BOA into 2-aminophenol (2-AP), as well as MBOA into 5-methoxy-2-aminophenol (2-AMP). The FDB2 cluster N-malonyltransferase FDB2/NAT1 then metabolizes aminophenols via N-malonylation to non-toxic malonamic acids. FDB2/NAT1 converts 2-AP into N-(2-hydroxyphenyl) malonamic acid (HPMA) and 2-AMP into N-(2-hydroxy-4-methoxyphenyl) malonamic acid (HMPMA). The duplicated dienlactone hydrolases DLH1 and DLH2 may provide redundant function for hydrolyzing the lactone moiety in the BOA molecule. The roles of the amidases an other enzymes encoded by the 2 FDB clusters have not been identified so far. This Gibberella moniliformis (strain M3125 / FGSC 7600) (Maize ear and stalk rot fungus) protein is Aldo-keto reductase FVEG_12638.